The sequence spans 262 residues: tRNA U34 carboxymethyltransferase (262 aa).

Carboxy-S-adenosyl-L-methionine is bound by residues lysine 25, tryptophan 39, lysine 44, glycine 63, 114 to 115, tyrosine 135, and arginine 250; that span reads VE.

It belongs to the class I-like SAM-binding methyltransferase superfamily. CmoB family. As to quaternary structure, homotetramer.

The enzyme catalyses carboxy-S-adenosyl-L-methionine + 5-hydroxyuridine(34) in tRNA = 5-carboxymethoxyuridine(34) in tRNA + S-adenosyl-L-homocysteine + H(+). Catalyzes carboxymethyl transfer from carboxy-S-adenosyl-L-methionine (Cx-SAM) to 5-hydroxyuridine (ho5U) to form 5-carboxymethoxyuridine (cmo5U) at position 34 in tRNAs. The protein is tRNA U34 carboxymethyltransferase of Helicobacter acinonychis (strain Sheeba).